Reading from the N-terminus, the 914-residue chain is Protein ECT2 (914 aa).

Ala2 bears the N-acetylalanine mark. 2 consecutive BRCT domains span residues 171–260 and 266–354; these read LYCT…AAVD and FKVP…MYLY. Residue Thr359 is modified to Phosphothreonine; by PKC/PRKCI. Ser367 and Ser370 each carry phosphoserine. At Thr373 the chain carries Phosphothreonine; by CDK1. Phosphoserine is present on Ser376. 2 short sequence motifs (nuclear localization signal) span residues 378-382 and 401-405; these read RKRRR and PRKRP. Residues 388–449 form a disordered region; that stretch reads AQLSRETDVS…SKSSTPVPSK (62 aa). The segment covering 418–429 has biased composition (polar residues); that stretch reads DISNTPESSINY. Residues 432-449 show a composition bias toward low complexity; sequence TPKSCTKSSKSSTPVPSK. Thr444 carries the phosphothreonine; by CDK1 modification. A DH domain is found at 452–641; that stretch reads ARWQVAKELY…KEVMTHINED (190 aa). A Glycyl lysine isopeptide (Lys-Gly) (interchain with G-Cter in SUMO2) cross-link involves residue Lys611. The PH domain occupies 675–794; sequence RVETISLGEH…KMLCRHVANT (120 aa). A phosphoserine mark is found at Ser716 and Ser842. Phosphothreonine; by CDK1 is present on Thr846. Residues 857–884 are disordered; sequence TSHGSVEGRSPSSNDKHVMSRLSSTSSL. Phosphoserine is present on residues Ser861 and Ser866.

As to quaternary structure, homodimer. Homooligomer. Found in the centralspindlin complex. Interacts with NR1I3. Interacts (Thr-359 phosphorylated form) with PARD6A; the interaction is observed in cancer cells. Interacts (Thr-359 phosphorylated form) with PRKCI; the interaction is observed in cancer cells. Interacts with PKP4; the interaction is observed at the midbody. Interacts with RACGAP1/CYK4; the interaction is direct, occurs in a microtubule-dependent manner, occurs at anaphase and during cytokinesis, is inhibited in metaphase by phosphorylation of ECT2 on Thr-373 and is stimulated in early anaphase by dephosphorylation of ECT2 probably on Thr-373 through CDK1 activity. Interacts with PLK1; the interaction is stimulated upon its phosphorylation on Thr-444. Interacts with RHOA; the interaction results in allosteric activation of ECT2. Interacts with KIF23, PARD3, PARD6B and PRKCQ. Interacts with NEDD9/HEF1. Post-translationally, phosphorylated by PLK1 in vitro. Hyperphosphorylated during the G2 phase of the cell cycle. Phosphorylation at Thr-373 occurs during the G2/M phase, relieves its auto-inhibition status and stimulates its GEF activity. Phosphorylation at Thr-444 in G2/M phase is required for subsequent binding with PLK1 and Rho exchange activation. Dephosphorylated at the time of cytokinesis. Phosphorylation at Thr-359 is required for its transformation activity in cancer cells. As to expression, expressed in lung epithelial cells (at protein level). Expressed in squamous cell carcinoma, primary non-small cell lung cancer tumors and lung adenocarcinoma.

Its subcellular location is the nucleus. It is found in the cytoplasm. The protein resides in the cytoskeleton. The protein localises to the spindle. It localises to the cleavage furrow. Its subcellular location is the midbody. It is found in the cell junction. The protein resides in the tight junction. The protein localises to the microtubule organizing center. It localises to the centrosome. With respect to regulation, autoinhibited by the C-terminal PH domain which folds back and binds to the surface of the DH domain, blocking binding of RHOA to the catalytic center of the DH domain. The 2nd BRCT domain is also involved in inhibition, probably by helping to impede RHOA binding. Allosterically activated by binding of activated GTP-bound RHOA to the PH domain which stimulates the release of PH inhibition and promotes the binding of substrate RHOA to the catalytic center. Binding of phosphorylated RACGAP1 to the N-terminal BRCT domain-containing region also releases autoinhibition. Functionally, guanine nucleotide exchange factor (GEF) that catalyzes the exchange of GDP for GTP. Promotes guanine nucleotide exchange on the Rho family members of small GTPases, like RHOA, RHOC, RAC1 and CDC42. Required for signal transduction pathways involved in the regulation of cytokinesis. Component of the centralspindlin complex that serves as a microtubule-dependent and Rho-mediated signaling required for the myosin contractile ring formation during the cell cycle cytokinesis. Regulates the translocation of RHOA from the central spindle to the equatorial region. Plays a role in the control of mitotic spindle assembly; regulates the activation of CDC42 in metaphase for the process of spindle fibers attachment to kinetochores before chromosome congression. Involved in the regulation of epithelial cell polarity; participates in the formation of epithelial tight junctions in a polarity complex PARD3-PARD6-protein kinase PRKCQ-dependent manner. Plays a role in the regulation of neurite outgrowth. Inhibits phenobarbital (PB)-induced NR1I3 nuclear translocation. Stimulates the activity of RAC1 through its association with the oncogenic PARD6A-PRKCI complex in cancer cells, thereby acting to coordinately drive tumor cell proliferation and invasion. Also stimulates genotoxic stress-induced RHOB activity in breast cancer cells leading to their cell death. This Homo sapiens (Human) protein is Protein ECT2.